The sequence spans 228 residues: Ribose-5-phosphate isomerase A (228 aa).

Substrate is bound by residues 27 to 30 (TGTT), 86 to 89 (DGAD), and 100 to 103 (KGMG). E109 (proton acceptor) is an active-site residue. Residue K127 coordinates substrate.

Belongs to the ribose 5-phosphate isomerase family. As to quaternary structure, homodimer.

It catalyses the reaction aldehydo-D-ribose 5-phosphate = D-ribulose 5-phosphate. It participates in carbohydrate degradation; pentose phosphate pathway; D-ribose 5-phosphate from D-ribulose 5-phosphate (non-oxidative stage): step 1/1. In terms of biological role, catalyzes the reversible conversion of ribose-5-phosphate to ribulose 5-phosphate. The polypeptide is Ribose-5-phosphate isomerase A (Borreliella burgdorferi (strain ZS7) (Borrelia burgdorferi)).